The primary structure comprises 489 residues: Ribonuclease G (489 aa).

Residues 39–128 (GNIYKGRVSR…LTTDITLPSR (90 aa)) enclose the S1 motif domain. Mg(2+) is bound by residues Asp-304 and Asp-347.

It belongs to the RNase E/G family. RNase G subfamily. As to quaternary structure, homodimer, and possible higher multimers. Mg(2+) serves as cofactor.

Its subcellular location is the cytoplasm. Functionally, acts in the processing of the 5'-end of precursors of 16S rRNA. Confers adaptive resistance to aminoglycoside antibiotics through modulation of 16S rRNA processing. An endoribonuclease, it prefers 5'-monophosphorylated substrates and cleaves single-stranded sites rich in A and U residues; also contributes to 23S rRNA processing, tRNA processing and mRNA turnover. Involved in decay of speF mRNA, has a preference for adenine nucleotides. This is Ribonuclease G from Salmonella typhimurium (strain SL1344).